Here is a 72-residue protein sequence, read N- to C-terminus: SRY-related protein MG42 (72 aa).

Positions 1–69 (VKRPMNAFMV…KHMADYPNYK (69 aa)) form a DNA-binding region, HMG box.

The protein localises to the nucleus. This Tarentola mauritanica (Common wall gecko) protein is SRY-related protein MG42.